The following is a 323-amino-acid chain: Pathogenicity locus probable regulatory protein WtsA (323 aa).

A Sigma-54 factor interaction domain is found at 41-251; the sequence is VAPLEIDLVL…ELKTAAKRFT (211 aa). Residues 52-59 and 123-132 contribute to the ATP site; these read GETGTGKD and EIDSMPLSLQ. Positions 293–312 form a DNA-binding region, H-T-H motif; it reads IDEAAMELGMPLRTLYHRIK.

Its function is as follows. Positive activator of wtsB involved in plant pathogenicity. Probably interacts with sigma-54. The chain is Pathogenicity locus probable regulatory protein WtsA (wtsA) from Pantoea stewartii subsp. stewartii (Erwinia stewartii).